Consider the following 514-residue polypeptide: Na(+)/H(+) antiporter NhaB (514 aa).

Transmembrane regions (helical) follow at residues 21–41, 43–63, 88–108, 143–163, 203–223, 239–259, 304–324, 349–369, 390–410, 448–468, and 484–504; these read LAIV…SPFI, GWLL…CYPL, IMAN…IFFM, FLDA…FYGV, LMMH…VGEP, FFLR…LTCF, ALIA…VGLI, QESL…AVII, LALF…VFVA, ATPN…SPLI, and IVLS…ATIW.

This sequence belongs to the NhaB Na(+)/H(+) (TC 2.A.34) antiporter family.

It is found in the cell inner membrane. It catalyses the reaction 2 Na(+)(in) + 3 H(+)(out) = 2 Na(+)(out) + 3 H(+)(in). In terms of biological role, na(+)/H(+) antiporter that extrudes sodium in exchange for external protons. The protein is Na(+)/H(+) antiporter NhaB of Haemophilus influenzae (strain 86-028NP).